Consider the following 179-residue polypeptide: Large ribosomal subunit protein bL9 (179 aa).

The interval 156–179 (PEGAPVPVAEEPAAEAEQAEVAAE) is disordered. Residues 157 to 166 (EGAPVPVAEE) show a composition bias toward low complexity. The span at 167–179 (PAAEAEQAEVAAE) shows a compositional bias: acidic residues.

Belongs to the bacterial ribosomal protein bL9 family.

In terms of biological role, binds to the 23S rRNA. In Porphyromonas gingivalis (strain ATCC 33277 / DSM 20709 / CIP 103683 / JCM 12257 / NCTC 11834 / 2561), this protein is Large ribosomal subunit protein bL9.